We begin with the raw amino-acid sequence, 386 residues long: S-adenosylmethionine synthase (386 aa).

Residue histidine 16 coordinates ATP. A Mg(2+)-binding site is contributed by aspartate 18. Residue glutamate 44 coordinates K(+). L-methionine-binding residues include glutamate 57 and glutamine 100. The segment at 100–110 (QSPDINQGVDR) is flexible loop. Residues 164-166 (DGK), 230-231 (KF), aspartate 239, 245-246 (RK), alanine 262, and lysine 266 each bind ATP. Aspartate 239 provides a ligand contact to L-methionine. Lysine 270 serves as a coordination point for L-methionine.

It belongs to the AdoMet synthase family. Homotetramer; dimer of dimers. Mg(2+) is required as a cofactor. Requires K(+) as cofactor.

It is found in the cytoplasm. The enzyme catalyses L-methionine + ATP + H2O = S-adenosyl-L-methionine + phosphate + diphosphate. The protein operates within amino-acid biosynthesis; S-adenosyl-L-methionine biosynthesis; S-adenosyl-L-methionine from L-methionine: step 1/1. In terms of biological role, catalyzes the formation of S-adenosylmethionine (AdoMet) from methionine and ATP. The overall synthetic reaction is composed of two sequential steps, AdoMet formation and the subsequent tripolyphosphate hydrolysis which occurs prior to release of AdoMet from the enzyme. In Wolinella succinogenes (strain ATCC 29543 / DSM 1740 / CCUG 13145 / JCM 31913 / LMG 7466 / NCTC 11488 / FDC 602W) (Vibrio succinogenes), this protein is S-adenosylmethionine synthase.